The sequence spans 182 residues: Large ribosomal subunit protein uL5 (182 aa).

This sequence belongs to the universal ribosomal protein uL5 family. As to quaternary structure, part of the 50S ribosomal subunit; part of the 5S rRNA/L5/L18/L25 subcomplex. Contacts the 5S rRNA and the P site tRNA. Forms a bridge to the 30S subunit in the 70S ribosome.

In terms of biological role, this is one of the proteins that bind and probably mediate the attachment of the 5S RNA into the large ribosomal subunit, where it forms part of the central protuberance. In the 70S ribosome it contacts protein S13 of the 30S subunit (bridge B1b), connecting the 2 subunits; this bridge is implicated in subunit movement. Contacts the P site tRNA; the 5S rRNA and some of its associated proteins might help stabilize positioning of ribosome-bound tRNAs. This Coxiella burnetii (strain CbuK_Q154) (Coxiella burnetii (strain Q154)) protein is Large ribosomal subunit protein uL5.